Here is a 228-residue protein sequence, read N- to C-terminus: 7-cyano-7-deazaguanine synthase (228 aa).

Residue 13 to 23 coordinates ATP; sequence LSGGMDSTLSS. Residues Cys-192, Cys-200, Cys-203, and Cys-206 each coordinate Zn(2+).

The protein belongs to the QueC family. The cofactor is Zn(2+).

It carries out the reaction 7-carboxy-7-deazaguanine + NH4(+) + ATP = 7-cyano-7-deazaguanine + ADP + phosphate + H2O + H(+). It participates in purine metabolism; 7-cyano-7-deazaguanine biosynthesis. Catalyzes the ATP-dependent conversion of 7-carboxy-7-deazaguanine (CDG) to 7-cyano-7-deazaguanine (preQ(0)). The polypeptide is 7-cyano-7-deazaguanine synthase (Aliarcobacter butzleri (strain RM4018) (Arcobacter butzleri)).